A 56-amino-acid chain; its full sequence is Large ribosomal subunit protein bL32 (56 aa).

Residues 1-37 (MAVQQNKKSRSRRDMRRSHDALTTAAISVDKASGEKH) form a disordered region. The span at 7–16 (KKSRSRRDMR) shows a compositional bias: basic residues.

This sequence belongs to the bacterial ribosomal protein bL32 family.

This is Large ribosomal subunit protein bL32 (rpmF) from Pasteurella multocida (strain Pm70).